Consider the following 62-residue polypeptide: Large ribosomal subunit protein bL28 (62 aa).

The protein belongs to the bacterial ribosomal protein bL28 family.

In Streptococcus thermophilus (strain CNRZ 1066), this protein is Large ribosomal subunit protein bL28.